The chain runs to 229 residues: Large ribosomal subunit protein uL1 (229 aa).

Belongs to the universal ribosomal protein uL1 family. In terms of assembly, part of the 50S ribosomal subunit.

Binds directly to 23S rRNA. The L1 stalk is quite mobile in the ribosome, and is involved in E site tRNA release. In terms of biological role, protein L1 is also a translational repressor protein, it controls the translation of the L11 operon by binding to its mRNA. This is Large ribosomal subunit protein uL1 from Flavobacterium psychrophilum (strain ATCC 49511 / DSM 21280 / CIP 103535 / JIP02/86).